Consider the following 1004-residue polypeptide: Sal-like protein 2 (1004 aa).

Disordered regions lie at residues 1–33 (MSRRKQRRPQQLISDCEGPSASENGDASEEDHP), 51–122 (AHQN…EESS), 137–177 (GGGL…SGHL), 220–270 (PASP…EPPK), and 285–307 (PFSVGGVGRSHKPTPAPSPALPG). The C2H2-type 1; atypical zinc finger occupies 34–56 (QVCAKCCAQFSDPTEFLAHQNSC). Residues 71-81 (NPSNSSASSAP) show a composition bias toward low complexity. Over residues 83–98 (PEGHSRSQVMDTEHSN) the composition is skewed to basic and acidic residues. Positions 99 to 110 (PPDSGSSGAPDP) are enriched in low complexity. The segment covering 151–171 (PLPPESTPAPPPPPPPPPPPG) has biased composition (pro residues). Phosphoserine is present on Ser-243. 5 consecutive C2H2-type zinc fingers follow at residues 372–394 (HKCRFCAKVFGSDSALQIHLRSH), 400–422 (YKCNVCGNRFTTRGNLKVHFHRH), 629–651 (NQCVICLRVLSCPRALRLHYGQH), 657–679 (FKCKVCGRAFSTRGNLRAHFVGH), and 689–711 (NSCPICQKKFTNAVTLQQHVRMH). The interval 712-910 (LGGQIPNGGS…PGESSGRKAC (199 aa)) is disordered. A compositionally biased stretch (polar residues) spans 731–742 (QENSSEQSTASG). Over residues 756–779 (PEEEMSEEEEEDEEEEEDVTDEDS) the composition is skewed to acidic residues. Ser-794, Ser-799, and Ser-803 each carry phosphoserine. Over residues 800 to 809 (EEVSGAEEEV) the composition is skewed to acidic residues. Residues 810 to 819 (ATSVAAPTTV) show a composition bias toward low complexity. Residues 820–829 (KEMDSNEKAP) show a composition bias toward basic and acidic residues. A compositionally biased stretch (pro residues) spans 832-841 (TLPPPPPPPD). Residues 896–910 (AMKKDPGESSGRKAC) show a composition bias toward basic and acidic residues. Lys-908 participates in a covalent cross-link: Glycyl lysine isopeptide (Lys-Gly) (interchain with G-Cter in ubiquitin). 2 C2H2-type zinc fingers span residues 908–930 (KACEVCGQSFPTQTALEEHQKTH) and 937–961 (FTCVFCRQGFLDRATLKKHMLLAHH).

This sequence belongs to the sal C2H2-type zinc-finger protein family. Expressed throughout embryonic development. In adult predominantly in brain.

The protein localises to the nucleus. Its function is as follows. Probable transcription factor that plays a role in eye development before, during, and after optic fissure closure. In Mus musculus (Mouse), this protein is Sal-like protein 2 (Sall2).